We begin with the raw amino-acid sequence, 233 residues long: tRNA (guanine-N(7)-)-methyltransferase (233 aa).

The disordered stretch occupies residues 1–22 (MIDENHPMRAAGNFFGRRHGKP). Positions 64, 89, 116, and 138 each coordinate S-adenosyl-L-methionine. Residue aspartate 138 is part of the active site. Residues lysine 142, aspartate 174, and 212–215 (TRYE) contribute to the substrate site.

The protein belongs to the class I-like SAM-binding methyltransferase superfamily. TrmB family.

It carries out the reaction guanosine(46) in tRNA + S-adenosyl-L-methionine = N(7)-methylguanosine(46) in tRNA + S-adenosyl-L-homocysteine. It participates in tRNA modification; N(7)-methylguanine-tRNA biosynthesis. In terms of biological role, catalyzes the formation of N(7)-methylguanine at position 46 (m7G46) in tRNA. This is tRNA (guanine-N(7)-)-methyltransferase from Brucella melitensis biotype 1 (strain ATCC 23456 / CCUG 17765 / NCTC 10094 / 16M).